A 156-amino-acid chain; its full sequence is Small ribosomal subunit protein uS7 (156 aa).

It belongs to the universal ribosomal protein uS7 family. As to quaternary structure, part of the 30S ribosomal subunit. Contacts proteins S9 and S11.

Functionally, one of the primary rRNA binding proteins, it binds directly to 16S rRNA where it nucleates assembly of the head domain of the 30S subunit. Is located at the subunit interface close to the decoding center, probably blocks exit of the E-site tRNA. In Erwinia tasmaniensis (strain DSM 17950 / CFBP 7177 / CIP 109463 / NCPPB 4357 / Et1/99), this protein is Small ribosomal subunit protein uS7.